An 88-amino-acid polypeptide reads, in one-letter code: DNA-directed RNA polymerase subunit omega (88 aa).

It belongs to the RNA polymerase subunit omega family. In terms of assembly, the RNAP catalytic core consists of 2 alpha, 1 beta, 1 beta' and 1 omega subunit. When a sigma factor is associated with the core the holoenzyme is formed, which can initiate transcription.

The catalysed reaction is RNA(n) + a ribonucleoside 5'-triphosphate = RNA(n+1) + diphosphate. Its function is as follows. Promotes RNA polymerase assembly. Latches the N- and C-terminal regions of the beta' subunit thereby facilitating its interaction with the beta and alpha subunits. In Actinobacillus succinogenes (strain ATCC 55618 / DSM 22257 / CCUG 43843 / 130Z), this protein is DNA-directed RNA polymerase subunit omega.